The chain runs to 244 residues: Globin-like protein 9 (244 aa).

Positions 1 to 38 are disordered; it reads MRRMAKYDRSYSMQDAHGPNGLARRGTQRGCSRSKSTR. The region spanning 47-200 is the Globin domain; sequence SLTFSQKQAL…LIDELRGGFE (154 aa). Heme-binding residues include His-111 and His-143.

Belongs to the globin family.

This is Globin-like protein 9 from Caenorhabditis briggsae.